The following is a 603-amino-acid chain: Membrane protein insertase YidC (603 aa).

Residues 7–27 (FFITIALSVLILAVWQYFYVL) form a helical membrane-spanning segment. Over residues 38 to 51 (RVEQQRVEEQKKAA) the composition is skewed to basic and acidic residues. The disordered stretch occupies residues 38 to 76 (RVEQQRVEEQKKAAEAANPGAGTPAPAPGTIPNAPGGDT). Positions 52–74 (EAANPGAGTPAPAPGTIPNAPGG) are enriched in low complexity. A run of 5 helical transmembrane segments spans residues 352-372 (FDLL…FWLI), 378-398 (FLGN…ALFF), 452-472 (WPVA…YITI), 497-517 (LFGL…WPLI), and 540-560 (IFTW…AGLV).

The protein belongs to the OXA1/ALB3/YidC family. Type 1 subfamily. As to quaternary structure, interacts with the Sec translocase complex via SecD. Specifically interacts with transmembrane segments of nascent integral membrane proteins during membrane integration.

It is found in the cell inner membrane. Its function is as follows. Required for the insertion and/or proper folding and/or complex formation of integral membrane proteins into the membrane. Involved in integration of membrane proteins that insert both dependently and independently of the Sec translocase complex, as well as at least some lipoproteins. Aids folding of multispanning membrane proteins. This chain is Membrane protein insertase YidC, found in Mesorhizobium japonicum (strain LMG 29417 / CECT 9101 / MAFF 303099) (Mesorhizobium loti (strain MAFF 303099)).